The sequence spans 366 residues: Chorismate synthase (366 aa).

Residues R48 and R54 each coordinate NADP(+). FMN contacts are provided by residues 125–127, 238–239, G278, 293–297, and R319; these read RSS, NA, and KPTSS.

It belongs to the chorismate synthase family. As to quaternary structure, homotetramer. FMNH2 is required as a cofactor.

The catalysed reaction is 5-O-(1-carboxyvinyl)-3-phosphoshikimate = chorismate + phosphate. It functions in the pathway metabolic intermediate biosynthesis; chorismate biosynthesis; chorismate from D-erythrose 4-phosphate and phosphoenolpyruvate: step 7/7. In terms of biological role, catalyzes the anti-1,4-elimination of the C-3 phosphate and the C-6 proR hydrogen from 5-enolpyruvylshikimate-3-phosphate (EPSP) to yield chorismate, which is the branch point compound that serves as the starting substrate for the three terminal pathways of aromatic amino acid biosynthesis. This reaction introduces a second double bond into the aromatic ring system. The protein is Chorismate synthase of Ralstonia nicotianae (strain ATCC BAA-1114 / GMI1000) (Ralstonia solanacearum).